Consider the following 247-residue polypeptide: Uridylate kinase (247 aa).

Lys17–Gly20 is an ATP binding site. Gly59 provides a ligand contact to UMP. Residues Gly60 and Arg64 each contribute to the ATP site. UMP contacts are provided by residues Asp79 and Thr140–Thr147. ATP contacts are provided by Thr167, Tyr173, and Asp176.

This sequence belongs to the UMP kinase family. Homohexamer.

The protein localises to the cytoplasm. The enzyme catalyses UMP + ATP = UDP + ADP. Its pathway is pyrimidine metabolism; CTP biosynthesis via de novo pathway; UDP from UMP (UMPK route): step 1/1. With respect to regulation, inhibited by UTP. In terms of biological role, catalyzes the reversible phosphorylation of UMP to UDP. This chain is Uridylate kinase, found in Legionella pneumophila (strain Lens).